Consider the following 378-residue polypeptide: Chaperone protein DnaJ 2 (378 aa).

A J domain is found at 4-68 (DYYAVLGVRR…QKKQVYDLGG (65 aa)). The CR-type zinc finger occupies 130–212 (GTTKDIQVDT…CAGDGRVRSR (83 aa)). Residues C143, C146, C160, C163, C186, C189, C200, and C203 each contribute to the Zn(2+) site. CXXCXGXG motif repeat units lie at residues 143–150 (CNTCNGEG), 160–167 (CDMCRGRG), 186–193 (CPQCQGFG), and 200–207 (CPECAGDG). Disordered stretches follow at residues 297–319 (RPGT…LRGG) and 351–378 (RGEE…FNGR). Positions 358 to 367 (GQFQPGQQGL) are enriched in polar residues.

The protein belongs to the DnaJ family. As to quaternary structure, homodimer. Zn(2+) is required as a cofactor.

It is found in the cytoplasm. Participates actively in the response to hyperosmotic and heat shock by preventing the aggregation of stress-denatured proteins and by disaggregating proteins, also in an autonomous, DnaK-independent fashion. Unfolded proteins bind initially to DnaJ; upon interaction with the DnaJ-bound protein, DnaK hydrolyzes its bound ATP, resulting in the formation of a stable complex. GrpE releases ADP from DnaK; ATP binding to DnaK triggers the release of the substrate protein, thus completing the reaction cycle. Several rounds of ATP-dependent interactions between DnaJ, DnaK and GrpE are required for fully efficient folding. Also involved, together with DnaK and GrpE, in the DNA replication of plasmids through activation of initiation proteins. The sequence is that of Chaperone protein DnaJ 2 from Streptomyces coelicolor (strain ATCC BAA-471 / A3(2) / M145).